An 86-amino-acid polypeptide reads, in one-letter code: RNA-binding protein Hfq (86 aa).

One can recognise a Sm domain in the interval 9–69; sequence DRFLNILRTS…VSTIMPESFV (61 aa).

This sequence belongs to the Hfq family. In terms of assembly, homohexamer.

Its function is as follows. RNA chaperone that binds small regulatory RNA (sRNAs) and mRNAs to facilitate mRNA translational regulation in response to envelope stress, environmental stress and changes in metabolite concentrations. Also binds with high specificity to tRNAs. The protein is RNA-binding protein Hfq of Thermosipho melanesiensis (strain DSM 12029 / CIP 104789 / BI429).